The primary structure comprises 400 residues: Probable splicing factor YJU2B (400 aa).

Positions 1-26 (MGERKGVNKYYPPDFNPEKHGSLNRY) are disordered. Ser-40 carries the phosphoserine modification. Residues 182–214 (LNSMLRKRFREKKKAMQEEEERDQALQAKASLA) adopt a coiled-coil conformation. The disordered stretch occupies residues 255 to 400 (WFPSTPGASA…VADYSGSESE (146 aa)). The span at 283–292 (RRATPTSSPV) shows a compositional bias: polar residues. Phosphoserine is present on Ser-310. The segment covering 327–341 (EGTNQNRPVSPQDCS) has biased composition (polar residues). Residues 364-380 (PQPPPDTSPEAPNPQDT) show a composition bias toward pro residues.

The protein belongs to the CWC16 family.

The protein resides in the nucleus. Its function is as follows. May be involved in mRNA splicing. The chain is Probable splicing factor YJU2B (YJU2B) from Bos taurus (Bovine).